Reading from the N-terminus, the 488-residue chain is Probable cytochrome P450 6u1 (488 aa).

Cys-430 is a heme binding site.

The protein belongs to the cytochrome P450 family. The cofactor is heme.

It is found in the endoplasmic reticulum membrane. The protein resides in the microsome membrane. May be involved in the metabolism of insect hormones and in the breakdown of synthetic insecticides. The protein is Probable cytochrome P450 6u1 (Cyp6u1) of Drosophila melanogaster (Fruit fly).